The chain runs to 94 residues: Evasin P1086 (94 aa).

An N-terminal signal peptide occupies residues 1–28 (MAFNVITFLQLAVFVVILFNINLHSASA). Disulfide bonds link cysteine 48–cysteine 67, cysteine 52–cysteine 69, and cysteine 63–cysteine 80. Residue asparagine 74 is glycosylated (N-linked (GlcNAc...) asparagine).

It localises to the secreted. Functionally, salivary chemokine-binding protein which binds to host chemokines CXCL1, CXCL2, CXCL3, CXCL5, CXCL6, CXCL10, CXCL12 and CXCL13. In Ixodes ricinus (Common tick), this protein is Evasin P1086.